The sequence spans 768 residues: Phosphoribosylformylglycinamidine synthase subunit PurL (768 aa).

His44 is an active-site residue. Tyr47 and Lys86 together coordinate ATP. Glu88 is a binding site for Mg(2+). Substrate contacts are provided by residues 89 to 92 (SHNH) and Arg111. The active-site Proton acceptor is His90. Mg(2+) is bound at residue Asp112. Position 235 (Gln235) interacts with substrate. Asp263 contributes to the Mg(2+) binding site. 307-309 (ESQ) is a substrate binding site. Residues Asp518 and Gly555 each coordinate ATP. Mg(2+) is bound at residue Asn556. Ser558 contributes to the substrate binding site.

The protein belongs to the FGAMS family. Monomer. Part of the FGAM synthase complex composed of 1 PurL, 1 PurQ and 2 PurS subunits.

The protein localises to the cytoplasm. The enzyme catalyses N(2)-formyl-N(1)-(5-phospho-beta-D-ribosyl)glycinamide + L-glutamine + ATP + H2O = 2-formamido-N(1)-(5-O-phospho-beta-D-ribosyl)acetamidine + L-glutamate + ADP + phosphate + H(+). The protein operates within purine metabolism; IMP biosynthesis via de novo pathway; 5-amino-1-(5-phospho-D-ribosyl)imidazole from N(2)-formyl-N(1)-(5-phospho-D-ribosyl)glycinamide: step 1/2. Functionally, part of the phosphoribosylformylglycinamidine synthase complex involved in the purines biosynthetic pathway. Catalyzes the ATP-dependent conversion of formylglycinamide ribonucleotide (FGAR) and glutamine to yield formylglycinamidine ribonucleotide (FGAM) and glutamate. The FGAM synthase complex is composed of three subunits. PurQ produces an ammonia molecule by converting glutamine to glutamate. PurL transfers the ammonia molecule to FGAR to form FGAM in an ATP-dependent manner. PurS interacts with PurQ and PurL and is thought to assist in the transfer of the ammonia molecule from PurQ to PurL. The polypeptide is Phosphoribosylformylglycinamidine synthase subunit PurL (Synechococcus sp. (strain JA-2-3B'a(2-13)) (Cyanobacteria bacterium Yellowstone B-Prime)).